A 340-amino-acid chain; its full sequence is Phosphoribosylformylglycinamidine cyclo-ligase (340 aa).

This sequence belongs to the AIR synthase family.

It localises to the cytoplasm. The enzyme catalyses 2-formamido-N(1)-(5-O-phospho-beta-D-ribosyl)acetamidine + ATP = 5-amino-1-(5-phospho-beta-D-ribosyl)imidazole + ADP + phosphate + H(+). The protein operates within purine metabolism; IMP biosynthesis via de novo pathway; 5-amino-1-(5-phospho-D-ribosyl)imidazole from N(2)-formyl-N(1)-(5-phospho-D-ribosyl)glycinamide: step 2/2. This Streptococcus pyogenes serotype M18 (strain MGAS8232) protein is Phosphoribosylformylglycinamidine cyclo-ligase.